The chain runs to 154 residues: Methylglyoxal synthase (154 aa).

Residues 6 to 154 form the MGS-like domain; sequence QSLPAKKNIA…KYLATRQIDI (149 aa). Substrate contacts are provided by residues His-19, Lys-23, 45-48, and 65-66; these read TGTT and SG. The Proton donor/acceptor role is filled by Asp-71. His-98 serves as a coordination point for substrate.

This sequence belongs to the methylglyoxal synthase family.

The catalysed reaction is dihydroxyacetone phosphate = methylglyoxal + phosphate. Its function is as follows. Catalyzes the formation of methylglyoxal from dihydroxyacetone phosphate. This chain is Methylglyoxal synthase, found in Pseudoalteromonas translucida (strain TAC 125).